The chain runs to 179 residues: Large ribosomal subunit protein uL6 (179 aa).

This sequence belongs to the universal ribosomal protein uL6 family. As to quaternary structure, part of the 50S ribosomal subunit.

In terms of biological role, this protein binds to the 23S rRNA, and is important in its secondary structure. It is located near the subunit interface in the base of the L7/L12 stalk, and near the tRNA binding site of the peptidyltransferase center. The chain is Large ribosomal subunit protein uL6 from Leptospira borgpetersenii serovar Hardjo-bovis (strain JB197).